A 154-amino-acid polypeptide reads, in one-letter code: uncharacterized protein (154 aa).

Residues 91-154 (PSEESWGCRQ…WGSPQPSRGA (64 aa)) form a disordered region. Residues 134 to 154 (SRDTSPLGGQSWGSPQPSRGA) are compositionally biased toward polar residues.

This is an uncharacterized protein from Homo sapiens (Human).